The primary structure comprises 199 residues: Transgelin-2 (199 aa).

Residue A2 is modified to N-acetylalanine. Phosphoserine is present on S11. 2 positions are modified to N6-acetyllysine: K17 and K20. Residues 24–136 (ADLEQILIQW…RTLMNLGGLA (113 aa)) form the Calponin-homology (CH) domain. S163 is subject to Phosphoserine. Residue K171 forms a Glycyl lysine isopeptide (Lys-Gly) (interchain with G-Cter in SUMO2) linkage. A Calponin-like repeat occupies 174–199 (IGLQMGTNRGASQAGMTGYGMPRQIL). Phosphothreonine is present on T180. 2 positions are modified to omega-N-methylarginine: R182 and R196.

It belongs to the calponin family.

This chain is Transgelin-2 (Tagln2), found in Mus musculus (Mouse).